The following is a 545-amino-acid chain: Afadin- and alpha-actinin-binding protein B (545 aa).

2 coiled-coil regions span residues 106–287 and 358–442; these read RSKE…SQRK and ARGD…AIRL. A disordered region spans residues 497–545; the sequence is HDRHLASSGDHYQRPRKTLPITPSSKHSLTQRESVAWRDSSISPNGTDF. Composition is skewed to polar residues over residues 517–529 and 536–545; these read ITPS…TQRE and SSISPNGTDF.

Belongs to the ADIP family. As to quaternary structure, interacts with WRAP73.

The protein localises to the cell junction. The protein resides in the adherens junction. It localises to the cytoplasm. It is found in the cytoskeleton. Its subcellular location is the microtubule organizing center. The protein localises to the centrosome. The protein resides in the centriolar satellite. In terms of biological role, belongs to an adhesion system, which plays a role in the organization of homotypic, interneuronal and heterotypic cell-cell adherens junctions (AJs). Involved in cell movement. Acts as a centrosome maturation factor, probably by maintaining the integrity of the pericentriolar material and proper microtubule nucleation at mitotic spindle poles. The function seems to implicate at least in part WRAP73; the SSX2IP:WRAP73 complex is proposed to act as regulator of spindle anchoring at the mitotic centrosome. The chain is Afadin- and alpha-actinin-binding protein B (ssx2ip-b) from Xenopus laevis (African clawed frog).